The following is a 101-amino-acid chain: Small ribosomal subunit protein uS10 (101 aa).

This sequence belongs to the universal ribosomal protein uS10 family. Part of the 30S ribosomal subunit.

Involved in the binding of tRNA to the ribosomes. In Brachyspira pilosicoli (Serpulina pilosicoli), this protein is Small ribosomal subunit protein uS10.